The following is a 99-amino-acid chain: uncharacterized protein (99 aa).

This is an uncharacterized protein from Acidianus hospitalis (AFV-1).